The chain runs to 156 residues: 6,7-dimethyl-8-ribityllumazine synthase (156 aa).

5-amino-6-(D-ribitylamino)uracil contacts are provided by residues F23, 57–59, and 81–83; these read AFE and TVI. 86–87 lines the (2S)-2-hydroxy-3-oxobutyl phosphate pocket; that stretch reads ST. Residue H89 is the Proton donor of the active site. F114 provides a ligand contact to 5-amino-6-(D-ribitylamino)uracil. Residue R128 coordinates (2S)-2-hydroxy-3-oxobutyl phosphate.

The protein belongs to the DMRL synthase family. As to quaternary structure, forms an icosahedral capsid composed of 60 subunits, arranged as a dodecamer of pentamers.

The catalysed reaction is (2S)-2-hydroxy-3-oxobutyl phosphate + 5-amino-6-(D-ribitylamino)uracil = 6,7-dimethyl-8-(1-D-ribityl)lumazine + phosphate + 2 H2O + H(+). The protein operates within cofactor biosynthesis; riboflavin biosynthesis; riboflavin from 2-hydroxy-3-oxobutyl phosphate and 5-amino-6-(D-ribitylamino)uracil: step 1/2. In terms of biological role, catalyzes the formation of 6,7-dimethyl-8-ribityllumazine by condensation of 5-amino-6-(D-ribitylamino)uracil with 3,4-dihydroxy-2-butanone 4-phosphate. This is the penultimate step in the biosynthesis of riboflavin. The protein is 6,7-dimethyl-8-ribityllumazine synthase of Shouchella clausii (strain KSM-K16) (Alkalihalobacillus clausii).